The chain runs to 583 residues: Fumarate reductase flavoprotein subunit (583 aa).

Residues 11-15 (GGGGA), 35-37 (VSK), 43-51 (SHTVSAEGG), 155-157 (WFA), and Asp211 each bind FAD. A Tele-8alpha-FAD histidine modification is found at His44. Active-site residues include His232 and Arg248. Residues 353–354 (HY), Glu377, and 388–394 (RLGSNSL) contribute to the FAD site.

It belongs to the FAD-dependent oxidoreductase 2 family. FRD/SDH subfamily. As to quaternary structure, part of an enzyme complex containing four subunits: a flavoprotein (FrdA), an iron-sulfur protein (FrdB), and two hydrophobic anchor proteins (FrdC and FrdD). FAD serves as cofactor.

Its subcellular location is the cell membrane. The catalysed reaction is a quinone + succinate = fumarate + a quinol. It carries out the reaction a menaquinone + succinate = a menaquinol + fumarate. The chain is Fumarate reductase flavoprotein subunit (frdA) from Mycobacterium tuberculosis (strain CDC 1551 / Oshkosh).